The chain runs to 269 residues: Putative carbamate hydrolase RutD (269 aa).

The region spanning 26 to 144 (VVLLSSGLGG…CFDTRLHLLN (119 aa)) is the AB hydrolase-1 domain.

This sequence belongs to the AB hydrolase superfamily. Hydrolase RutD family.

The enzyme catalyses carbamate + 2 H(+) = NH4(+) + CO2. In terms of biological role, involved in pyrimidine catabolism. May facilitate the hydrolysis of carbamate, a reaction that can also occur spontaneously. This chain is Putative carbamate hydrolase RutD, found in Caulobacter vibrioides (strain ATCC 19089 / CIP 103742 / CB 15) (Caulobacter crescentus).